The sequence spans 180 residues: ATP synthase subunit delta (180 aa).

It belongs to the ATPase delta chain family. F-type ATPases have 2 components, F(1) - the catalytic core - and F(0) - the membrane proton channel. F(1) has five subunits: alpha(3), beta(3), gamma(1), delta(1), epsilon(1). F(0) has three main subunits: a(1), b(2) and c(10-14). The alpha and beta chains form an alternating ring which encloses part of the gamma chain. F(1) is attached to F(0) by a central stalk formed by the gamma and epsilon chains, while a peripheral stalk is formed by the delta and b chains.

It is found in the cell membrane. F(1)F(0) ATP synthase produces ATP from ADP in the presence of a proton or sodium gradient. F-type ATPases consist of two structural domains, F(1) containing the extramembraneous catalytic core and F(0) containing the membrane proton channel, linked together by a central stalk and a peripheral stalk. During catalysis, ATP synthesis in the catalytic domain of F(1) is coupled via a rotary mechanism of the central stalk subunits to proton translocation. In terms of biological role, this protein is part of the stalk that links CF(0) to CF(1). It either transmits conformational changes from CF(0) to CF(1) or is implicated in proton conduction. This is ATP synthase subunit delta from Caldicellulosiruptor bescii (strain ATCC BAA-1888 / DSM 6725 / KCTC 15123 / Z-1320) (Anaerocellum thermophilum).